The sequence spans 396 residues: Calcium-binding and spermatid-specific protein 1 (396 aa).

Residues 1 to 21 (MAEDGLPKIYSHPPTESSKTP) are disordered. Phosphoserine is present on serine 274. The interval 276 to 296 (EKDKDNQEDTLLTDEESPEGA) is disordered. Residues 283 to 293 (EDTLLTDEESP) are compositionally biased toward acidic residues. Residue threonine 288 is modified to Phosphothreonine; by CK2. 2 positions are modified to phosphoserine: serine 320 and serine 377. The disordered stretch occupies residues 336 to 396 (EDSSTEEELS…LKEEPDEFMI (61 aa)).

The protein resides in the cytoplasm. It localises to the mitochondrion inner membrane. The protein localises to the cell projection. It is found in the cilium. Its subcellular location is the flagellum. The protein resides in the cytoplasmic vesicle. It localises to the secretory vesicle. The protein localises to the acrosome. Calcium-binding protein. Essential for maintaining the structural integrity of the sperm flagella. The polypeptide is Calcium-binding and spermatid-specific protein 1 (CABS1) (Macaca fascicularis (Crab-eating macaque)).